A 292-amino-acid polypeptide reads, in one-letter code: Short chain dehydrogenase/reductase CPUR_05418 (292 aa).

2 residues coordinate NADP(+): isoleucine 44 and arginine 156. Active-site proton donor residues include serine 172 and tyrosine 186. NADP(+)-binding residues include tyrosine 186, lysine 190, isoleucine 221, and threonine 223. Lysine 190 serves as the catalytic Lowers pKa of active site Tyr.

This sequence belongs to the short-chain dehydrogenases/reductases (SDR) family.

Its pathway is secondary metabolite biosynthesis. Its function is as follows. Short chain dehydrogenase/reductase; part of the ergochrome gene cluster responsible for the typical purple-black color of the ergot sclerotia. The ergochrome gene cluster produces several ergot pigments including the yellow ergochrome secalonic acid and its derivatives, as well as the red anthraquinones endocrocin and clavorubin. The pathway begins with the synthesis of atrochrysone thioester by the polyketide synthase (PKS) CPUR_05437. The atrochrysone carboxyl ACP thioesterase CPUR_05436 then breaks the thioester bond and releases the atrochrysone carboxylic acid from CPUR_05437. The atrochrysone carboxylic acid is then converted to atrochrysone which is further transformed into emodin anthrone. The next step is performed by the anthrone oxygenase CPUR_05434 that catalyzes the oxidation of emodinanthrone to emodin. Emodin is further modified to yield monodictyphenone via several steps involving CPUR_05427, CPUR_05428, CPUR_05429 and CPUR_05430. The short chain dehydrogenase/reductase CPUR_05418 then catalyzes the C-5 ketoreduction to give the xanthone skeleton of the monomeric units. Ergochromes formation requires further dimerization steps of different xanthone units, probably catalyzed by the cytochrome P450 monooxygenase CPUR_05419. CPUR_05425, CPUR_05426 and CPUR_05431 are unique to Claviceps, thus it is likely that they are involved in further modification of xanthone units or in their dimerization. The yellow ergochromes and the red anthraquinone pigments endocrocin and clavorubin are products from the same PKS derived precursors and the latter are likely shunt products in the pathway of xanthone biosynthesis. It is proposed that atrochrysone carboxylic acid released from the PKS CPUR_05437 can also be converted to endocrocin anthrone which is further oxidized into endocrocin by CPUR_05435. Endocrocin could be then modified to clavorubin, possibly by CPUR_05423 and CPUR_05431. Clavorubin is the principal anthraquinone metabolite produced by the cluster with a much higher yield compared to endocrocin. The sequence is that of Short chain dehydrogenase/reductase CPUR_05418 from Claviceps purpurea (strain 20.1) (Ergot fungus).